Reading from the N-terminus, the 161-residue chain is uncharacterized protein (161 aa).

Belongs to the M.jannaschii MJ0150/MJ0739/MJ0745/MJ1460/MJ1642 family.

This is an uncharacterized protein from Methanocaldococcus jannaschii (strain ATCC 43067 / DSM 2661 / JAL-1 / JCM 10045 / NBRC 100440) (Methanococcus jannaschii).